We begin with the raw amino-acid sequence, 2776 residues long: Microtubule-associated protein 1A (2776 aa).

5 positions are modified to phosphoserine: S114, S117, S118, S121, and S155. Y177 carries the post-translational modification Phosphotyrosine. Residues 310–331 are disordered; that stretch reads PSKIKHRADSKESLKAAPKTAM. 2 positions are modified to phosphoserine: S319 and S322. Copy 1 of the repeat occupies 336-338; it reads KRE. The tract at residues 336–541 is 11 X 3 AA approximate repeats of K-K-[DE]; that stretch reads KREEVLEEGA…TQDFEELKRE (206 aa). Residues 345 to 390 show a composition bias toward basic and acidic residues; sequence AKEARSELAKELAKSEKKAKEPSEKPPEKPSKPERVRTESSEALKA. 8 disordered regions span residues 345-678, 738-809, 846-1076, 1094-1210, 1223-1651, 1685-1729, 1744-1848, and 1866-2648; these read AKEA…KAES, TIPG…TELT, EDQS…AGGQ, ETGE…ESLG, EKGP…SPEQ, DGQG…FKDF, LAES…APFS, and AELE…NGLK. A Phosphoserine modification is found at S384. Residues 391–406 show a composition bias toward basic residues; sequence EKRKLIKDKVGKKHLK. 2 stretches are compositionally biased toward basic and acidic residues: residues 407–464 and 484–500; these read EKIS…KPDL and LKVD…ELSS. Repeat copies occupy residues 415–417, 420–422, 424–426, 427–429, 431–433, 436–438, 440–442, 444–446, and 449–451. A Phosphothreonine modification is found at T504. Residues S526 and S527 each carry the phosphoserine modification. A compositionally biased stretch (basic and acidic residues) spans 536–556; it reads EELKREERGLLAEPRDTELGE. Copy 11 of the repeat occupies 539-541; sequence KRE. Positions 567–579 are enriched in polar residues; sequence GRPSTAIQVTQPP. The span at 587–631 shows a compositional bias: basic and acidic residues; that stretch reads QVEREKEVVPDFPEDKGSKNRAPDSGAEVEREKETWEERKPREAE. Phosphoserine occurs at positions 604 and 611. T633 is subject to Phosphothreonine. Basic and acidic residues predominate over residues 640–667; sequence AREESEPEVKEDVIEKAELEEMEEVHPS. S644, S667, S678, and S786 each carry phosphoserine. 3 stretches are compositionally biased toward polar residues: residues 785–800, 846–859, and 870–882; these read ASQS…SSKT, EDQS…PQTE, and TVTS…TEAT. A phosphoserine mark is found at S873, S876, S877, and S890. Residue T893 is modified to Phosphothreonine. S895, S899, and S908 each carry phosphoserine. Residues 944–954 show a composition bias toward polar residues; sequence VTTSEKLSSQY. Phosphoserine occurs at positions 981, 991, 999, 1008, 1014, 1023, and 1062. Residue T1068 is modified to Phosphothreonine. A compositionally biased stretch (low complexity) spans 1096–1105; that stretch reads GEAGAASGAG. A compositionally biased stretch (basic and acidic residues) spans 1112–1124; it reads RTQEPAEPQKDEL. S1131, S1133, S1147, S1159, S1177, S1187, S1190, S1196, S1205, and S1208 each carry phosphoserine. Residues 1179 to 1189 are compositionally biased toward polar residues; that stretch reads EDTQSLSFSEE. Polar residues predominate over residues 1197-1210; that stretch reads LDISSKQLSPESLG. Residues 1223 to 1234 are compositionally biased toward basic and acidic residues; sequence EKGPLVKAEDNS. Phosphoserine occurs at positions 1251, 1289, 1310, 1313, and 1316. Low complexity predominate over residues 1302–1317; that stretch reads TSDSSLTKSPESLSSP. 6 stretches are compositionally biased toward basic and acidic residues: residues 1332–1350, 1370–1384, 1391–1435, 1449–1488, 1499–1541, and 1549–1599; these read GSED…RKSE, SVMH…EENK, KTSE…KALE, PRAR…RAPE, RAPE…DQDN, and GTLK…EKTR. A phosphoserine mark is found at S1516, S1580, and S1606. The segment covering 1609–1625 has biased composition (basic and acidic residues); that stretch reads EEGKAREQEEKYWKEQD. 2 positions are modified to phosphoserine: S1634 and S1648. Residues 1709–1718 show a composition bias toward polar residues; it reads QEITPLQHTP. 5 positions are modified to phosphoserine: S1720, S1747, S1762, S1768, and S1772. Residue T1777 is modified to Phosphothreonine. 2 positions are modified to phosphoserine: S1783 and S1789. Residues 1794 to 1808 are compositionally biased toward polar residues; the sequence is TKSTPPTRNEPTTPS. Over residues 1823–1844 the composition is skewed to pro residues; sequence LPPAPLSPAPAPPTPAPDPHAP. Residues 1878 to 1890 are compositionally biased toward basic and acidic residues; that stretch reads KDYRKAEGEREGE. A Phosphoserine modification is found at S1902. Basic and acidic residues-rich tracts occupy residues 1907–1935 and 1972–1988; these read EVTE…DERS and STKE…EKEL. The residue at position 1928 (T1928) is a Phosphothreonine. A compositionally biased stretch (polar residues) spans 1990–2006; sequence SAVSPPNLHSDTPTFSY. At S1993 the chain carries Phosphoserine. Over residues 2013 to 2039 the composition is skewed to pro residues; sequence TIPPRQEPEPGPNVEPSFTPPAVPPRA. Position 2031 is a phosphothreonine (T2031). The span at 2042 to 2058 shows a compositional bias: polar residues; it reads SLSQDPSPPLNGSTTSC. Phosphoserine is present on residues S2048 and S2082. Basic and acidic residues predominate over residues 2060-2096; that stretch reads PDRRTPSPKEAGRSHWDDGTNDSDLEKGAREQPEKET. The span at 2149 to 2158 shows a compositional bias: pro residues; sequence PAPPQLPSPA. Phosphoserine is present on residues S2209, S2226, S2230, S2233, and S2234. Positions 2231–2242 are enriched in polar residues; sequence EGSSSEATTPVI. Low complexity predominate over residues 2279–2292; the sequence is PLSPAPLASRDLAP. A compositionally biased stretch (basic and acidic residues) spans 2355–2367; sequence AEKEEAEALHAWE. Position 2425 is a phosphoserine (S2425). The span at 2478–2490 shows a compositional bias: low complexity; the sequence is SASDSGSSQSDSD. Over residues 2535–2551 the composition is skewed to pro residues; sequence DPPPAPLPDPRPPPPRP. Residues 2566 to 2576 show a composition bias toward basic and acidic residues; it reads GRVERLREKVQ. Phosphoserine is present on residues S2623 and S2637.

The protein belongs to the MAP1 family. As to quaternary structure, 3 different light chains, LC1 (a cleavage product of MAP1B), LC2 (a cleavage product of MAP1A) and LC3 (produced by one of the MAP1LC3 genes), can associate with the MAP1A or MAP1B heavy chains. Interacts with guanylate kinase-like domain of DLG1, DLG2 and DLG4. Binds to CSNK1D. Interacts with TIAM2. In terms of assembly, interacts with ELAVL4. Post-translationally, phosphorylated by CSNK1D. In terms of processing, LC2 is generated from MAP1A by proteolytic processing. It is free to associate with both MAP1A and MAP1B. Both isoforms highly expressed in brain, and to a lesser extent in embryo. Isoform 1 is also expressed at a low level in other tissues including heart and muscle.

The protein localises to the cytoplasm. Its subcellular location is the cytoskeleton. Structural protein involved in the filamentous cross-bridging between microtubules and other skeletal elements. This is Microtubule-associated protein 1A (Map1a) from Mus musculus (Mouse).